Consider the following 467-residue polypeptide: 2-succinylbenzoate--CoA ligase (467 aa).

It belongs to the ATP-dependent AMP-binding enzyme family. MenE subfamily.

The enzyme catalyses 2-succinylbenzoate + ATP + CoA = 2-succinylbenzoyl-CoA + AMP + diphosphate. The protein operates within quinol/quinone metabolism; 1,4-dihydroxy-2-naphthoate biosynthesis; 1,4-dihydroxy-2-naphthoate from chorismate: step 5/7. Its pathway is quinol/quinone metabolism; menaquinone biosynthesis. Converts 2-succinylbenzoate (OSB) to 2-succinylbenzoyl-CoA (OSB-CoA). The protein is 2-succinylbenzoate--CoA ligase of Listeria monocytogenes serotype 4b (strain F2365).